A 214-amino-acid polypeptide reads, in one-letter code: Adenylate kinase (214 aa).

10-15 (GAGKGT) contacts ATP. An NMP region spans residues 30-59 (STGDMLRAAIKAGSELGNKAKAVMDAGQLV). AMP-binding positions include T31, R36, 57–59 (QLV), 85–88 (GFPR), and Q92. Positions 122 to 159 (GRRVHSGSGRVYHLVYNPPKVEGKDDVSGDDLSIRPDD) are LID. Residues R123 and 132-133 (VY) each bind ATP. AMP-binding residues include R156 and R167. Q200 contributes to the ATP binding site.

This sequence belongs to the adenylate kinase family. In terms of assembly, monomer.

It localises to the cytoplasm. The enzyme catalyses AMP + ATP = 2 ADP. It participates in purine metabolism; AMP biosynthesis via salvage pathway; AMP from ADP: step 1/1. Its function is as follows. Catalyzes the reversible transfer of the terminal phosphate group between ATP and AMP. Plays an important role in cellular energy homeostasis and in adenine nucleotide metabolism. This Colwellia psychrerythraea (strain 34H / ATCC BAA-681) (Vibrio psychroerythus) protein is Adenylate kinase.